The following is a 199-amino-acid chain: dTTP/UTP pyrophosphatase (199 aa).

Catalysis depends on aspartate 79, which acts as the Proton acceptor.

The protein belongs to the Maf family. YhdE subfamily. Requires a divalent metal cation as cofactor.

The protein resides in the cytoplasm. It catalyses the reaction dTTP + H2O = dTMP + diphosphate + H(+). The catalysed reaction is UTP + H2O = UMP + diphosphate + H(+). Functionally, nucleoside triphosphate pyrophosphatase that hydrolyzes dTTP and UTP. May have a dual role in cell division arrest and in preventing the incorporation of modified nucleotides into cellular nucleic acids. In Porphyromonas gingivalis (strain ATCC 33277 / DSM 20709 / CIP 103683 / JCM 12257 / NCTC 11834 / 2561), this protein is dTTP/UTP pyrophosphatase.